The chain runs to 361 residues: GDP-mannose 4,6 dehydratase 1 (361 aa).

NADP(+) contacts are provided by residues 23 to 28 (GITGQD), 79 to 80 (DL), 101 to 105 (LAAQS), and Tyr-116. Residue Ser-150 is part of the active site. Residues Glu-152 and Tyr-173 each act as nucleophile in the active site. NADP(+)-binding residues include Lys-177, His-203, and Arg-208.

Belongs to the NAD(P)-dependent epimerase/dehydratase family. GDP-mannose 4,6-dehydratase subfamily. As to quaternary structure, homotetramer. It depends on NADP(+) as a cofactor. Expressed in roots,stipules and pollen just before anthesis. Primarily localized to the root meristem and columella root cap. Not expressed in emerging lateral roots.

It carries out the reaction GDP-alpha-D-mannose = GDP-4-dehydro-alpha-D-rhamnose + H2O. Its pathway is nucleotide-sugar biosynthesis; GDP-L-fucose biosynthesis via de novo pathway; GDP-L-fucose from GDP-alpha-D-mannose: step 1/2. Catalyzes the conversion of GDP-D-mannose to GDP-4-dehydro-6-deoxy-D-mannose. This chain is GDP-mannose 4,6 dehydratase 1 (GMD1), found in Arabidopsis thaliana (Mouse-ear cress).